The following is a 208-amino-acid chain: Large ribosomal subunit protein uL4 (208 aa).

The tract at residues 45 to 84 (RQGTHKVKNRSEVRGGGKKPYRQKGTGHARQGSSRSGLMS) is disordered. Positions 60 to 71 (GGKKPYRQKGTG) are enriched in basic residues.

This sequence belongs to the universal ribosomal protein uL4 family. Part of the 50S ribosomal subunit.

One of the primary rRNA binding proteins, this protein initially binds near the 5'-end of the 23S rRNA. It is important during the early stages of 50S assembly. It makes multiple contacts with different domains of the 23S rRNA in the assembled 50S subunit and ribosome. Functionally, forms part of the polypeptide exit tunnel. The chain is Large ribosomal subunit protein uL4 from Prosthecochloris aestuarii (strain DSM 271 / SK 413).